Reading from the N-terminus, the 402-residue chain is UDP-GlcNAc:betaGal beta-1,3-N-acetylglucosaminyltransferase 9 (402 aa).

Topologically, residues 1–10 are cytoplasmic; sequence MRRRLRLRRD. The helical; Signal-anchor for type II membrane protein transmembrane segment at 11 to 27 threads the bilayer; sequence ALLTLLLGASLGLLLYA. Topologically, residues 28–402 are lumenal; that stretch reads QRDGAAPTAS…VAAGPFQWDS (375 aa). A compositionally biased stretch (low complexity) spans 32–47; sequence AAPTASAPRGRGRAAP. Residues 32–83 form a disordered region; that stretch reads AAPTASAPRGRGRAAPRPTPGPRAFQLPDAGAAPPAYEGDTPAPPTPTGPFD.

Belongs to the glycosyltransferase 31 family.

It localises to the golgi apparatus membrane. This Homo sapiens (Human) protein is UDP-GlcNAc:betaGal beta-1,3-N-acetylglucosaminyltransferase 9.